Reading from the N-terminus, the 201-residue chain is CASP-like protein 2D1 (201 aa).

The Cytoplasmic segment spans residues 1–26; it reads MRSGEGSTAAAAAAEEEKVKVAAPFR. Residues 27–47 form a helical membrane-spanning segment; sequence LAELGLRVCAVPLAVASVWEM. At 48 to 70 the chain is on the extracellular side; it reads ATNKQVDETYGEVRFSDLSGFRY. The chain crosses the membrane as a helical span at residues 71–91; that stretch reads LVWINAITAAYSVASILLSSC. At 92–98 the chain is on the cytoplasmic side; that stretch reads RFITRFD. Residues 99–119 form a helical membrane-spanning segment; that stretch reads WLIFILDQASAYLLLTSASAA. Over 120 to 148 the chain is Extracellular; sequence AEVVYLAREGDREVSWGEVCSYFGRFCGA. Residues 149–169 traverse the membrane as a helical segment; it reads ATVSVALNAAALLCFMALSLI. The Cytoplasmic portion of the chain corresponds to 170–201; that stretch reads SAFRVFTKFNPPSQSNSKQQLSQEQGKPVVSG. Positions 180–194 are enriched in polar residues; that stretch reads PPSQSNSKQQLSQEQ. Residues 180–201 form a disordered region; it reads PPSQSNSKQQLSQEQGKPVVSG.

It belongs to the Casparian strip membrane proteins (CASP) family. As to quaternary structure, homodimer and heterodimers.

The protein localises to the cell membrane. The polypeptide is CASP-like protein 2D1 (Oryza sativa subsp. indica (Rice)).